The sequence spans 66 residues: Large ribosomal subunit protein bL35 (66 aa).

Belongs to the bacterial ribosomal protein bL35 family.

The chain is Large ribosomal subunit protein bL35 from Borreliella afzelii (strain PKo) (Borrelia afzelii).